The primary structure comprises 348 residues: Protein pelota homolog (348 aa).

It belongs to the eukaryotic release factor 1 family. Pelota subfamily. Monomer. Requires a divalent metal cation as cofactor.

It is found in the cytoplasm. Its function is as follows. May function in recognizing stalled ribosomes, interact with stem-loop structures in stalled mRNA molecules, and effect endonucleolytic cleavage of the mRNA. May play a role in the release non-functional ribosomes and degradation of damaged mRNAs. Has endoribonuclease activity. In Methanococcus maripaludis (strain C7 / ATCC BAA-1331), this protein is Protein pelota homolog.